Consider the following 199-residue polypeptide: 7-methyl-GTP pyrophosphatase (199 aa).

Aspartate 74 acts as the Proton acceptor in catalysis.

Belongs to the Maf family. YceF subfamily. Requires a divalent metal cation as cofactor.

It is found in the cytoplasm. It carries out the reaction N(7)-methyl-GTP + H2O = N(7)-methyl-GMP + diphosphate + H(+). Its function is as follows. Nucleoside triphosphate pyrophosphatase that hydrolyzes 7-methyl-GTP (m(7)GTP). May have a dual role in cell division arrest and in preventing the incorporation of modified nucleotides into cellular nucleic acids. In Albidiferax ferrireducens (strain ATCC BAA-621 / DSM 15236 / T118) (Rhodoferax ferrireducens), this protein is 7-methyl-GTP pyrophosphatase.